A 258-amino-acid polypeptide reads, in one-letter code: 5'-nucleotidase SurE (258 aa).

D16, D17, S47, and N99 together coordinate a divalent metal cation.

Belongs to the SurE nucleotidase family. A divalent metal cation is required as a cofactor.

It is found in the cytoplasm. It carries out the reaction a ribonucleoside 5'-phosphate + H2O = a ribonucleoside + phosphate. Functionally, nucleotidase that shows phosphatase activity on nucleoside 5'-monophosphates. This Coxiella burnetii (strain CbuK_Q154) (Coxiella burnetii (strain Q154)) protein is 5'-nucleotidase SurE.